Consider the following 1084-residue polypeptide: Histone deacetylase 4 (1084 aa).

A coiled-coil region spans residues 67–177 (REQQLQQELL…STEVKMKLQE (111 aa)). Positions 118–313 (MLAMKHQQEL…NNSSGSVSAE (196 aa)) are interaction with MEF2A. Basic and acidic residues predominate over residues 133–163 (KLERHRQEQELEKQHREQKLQQLKNKEKGKE). 3 disordered regions span residues 133–166 (KLERHRQEQELEKQHREQKLQQLKNKEKGKESAV), 206–226 (TQHSSLDQSSPPQSGVSTSYN), and 240–315 (PLRK…AENG). Phosphoserine is present on Ser-210. Residue Ser-246 is modified to Phosphoserine; by CaMK4 and SIK1. Basic and acidic residues predominate over residues 259 to 274 (KVAERRSSPLLRRKDG). Residues 290-312 (SACSSAPGSGPSSPNNSSGSVSA) show a composition bias toward low complexity. A PxLPxI/L motif; mediates interaction with ANKRA2 and 14-3-3 proteins motif is present at residues 349–354 (PSLPNI). Phosphoserine is present on Ser-350. Position 467 is a phosphoserine; by CaMK4 and SIK1 (Ser-467). Disordered stretches follow at residues 509–531 (PKPSEPARQPESHPEETEEELRE), 548–585 (KEAHAQAGVQVKQEPIESDEEEAEPPREVEPGQRQPSE), and 626–646 (PLSRAQSSPASATFPVSVQEP). Residues 516 to 531 (RQPESHPEETEEELRE) show a composition bias toward basic and acidic residues. Lys-559 participates in a covalent cross-link: Glycyl lysine isopeptide (Lys-Gly) (interchain with G-Cter in SUMO). The residue at position 565 (Ser-565) is a Phosphoserine. Over residues 629 to 641 (RAQSSPASATFPV) the composition is skewed to polar residues. At Ser-632 the chain carries Phosphoserine; by CaMK4. At Ser-633 the chain carries Phosphoserine. The tract at residues 655-1084 (GLVYDTLMLK…EEPMEEEPPL (430 aa)) is histone deacetylase. Zn(2+)-binding residues include Cys-667, Cys-669, His-675, and Cys-751. Residue His-803 is part of the active site. The short motif at 1051–1084 (EEAETVTAMASLSVGVKPAEKRPDEEPMEEEPPL) is the Nuclear export signal element. The segment at 1061-1084 (SLSVGVKPAEKRPDEEPMEEEPPL) is disordered.

The protein belongs to the histone deacetylase family. HD type 2 subfamily. As to quaternary structure, homodimer. Homodimerization via its N-terminal domain. Interacts with MEF2A. Interacts with MEF2C and MEF2D. Interacts with AHRR. Interacts with NR2C1. Interacts with HDAC7. Interacts with a 14-3-3 chaperone proteins in a phosphorylation dependent manner. Interacts with 14-3-3 protein YWHAB. Interacts with BTBD14B. Interacts with KDM5B. Interacts with MYOCD. Interacts with MORC2. Interacts (via PxLPxI/L motif) with ANKRA2 (via ankyrin repeats). Interacts with CUL7 (as part of the 3M complex); negatively regulated by ANKRA2. Interacts with EP300 in the presence of TFAP2C. Interacts with HSPA1A and HSPA1B leading to their deacetylation at 'Lys-77'. Interacts with ZBTB7B; the interaction allows the recruitment of HDAC4 on CD8 loci for deacetylation and possible inhibition of CD8 genes expression. Interacts with DHX36. Interacts with SIK3; this interaction leads to HDAC4 retention in the cytoplasm. Interacts with ZNF638. Phosphorylated by CaMK4 at Ser-246, Ser-467 and Ser-632. Phosphorylation at other residues by CaMK2D is required for the interaction with 14-3-3. Phosphorylation at Ser-350, within the PxLPxI/L motif, impairs the binding of ANKRA2 but generates a high-affinity docking site for 14-3-3. Post-translationally, sumoylation on Lys-559 is promoted by the E3 SUMO-protein ligase RANBP2, and prevented by phosphorylation by CaMK4. In terms of tissue distribution, ubiquitous.

It is found in the nucleus. The protein resides in the cytoplasm. It catalyses the reaction N(6)-acetyl-L-lysyl-[histone] + H2O = L-lysyl-[histone] + acetate. In terms of biological role, responsible for the deacetylation of lysine residues on the N-terminal part of the core histones (H2A, H2B, H3 and H4). Histone deacetylation gives a tag for epigenetic repression and plays an important role in transcriptional regulation, cell cycle progression and developmental events. Histone deacetylases act via the formation of large multiprotein complexes. Involved in muscle maturation via its interaction with the myocyte enhancer factors such as MEF2A, MEF2C and MEF2D. Involved in the MTA1-mediated epigenetic regulation of ESR1 expression in breast cancer. Deacetylates HSPA1A and HSPA1B at 'Lys-77' leading to their preferential binding to co-chaperone STUB1. The sequence is that of Histone deacetylase 4 from Homo sapiens (Human).